The following is a 236-amino-acid chain: Exosome complex component Rrp4 (236 aa).

The S1 motif domain maps to 64–133 (GDKVIGKVIE…EIKESWLTLK (70 aa)). Residues 141-199 (EGGHMVLIHASRVPRVIGKGGGMVNMVKELTATRIIIGQNGLIWIDGPIEGVTMAIAAI) enclose the KH domain.

It belongs to the RRP4 family. In terms of assembly, component of the archaeal exosome complex. Forms a trimer of Rrp4 and/or Csl4 subunits. The trimer associates with a hexameric ring-like arrangement composed of 3 Rrp41-Rrp42 heterodimers.

The protein localises to the cytoplasm. Its function is as follows. Non-catalytic component of the exosome, which is a complex involved in RNA degradation. Increases the RNA binding and the efficiency of RNA degradation. Confers strong poly(A) specificity to the exosome. This chain is Exosome complex component Rrp4, found in Thermoplasma acidophilum (strain ATCC 25905 / DSM 1728 / JCM 9062 / NBRC 15155 / AMRC-C165).